Consider the following 389-residue polypeptide: MHTSTEARMGMRAALTGFAVLMLLQSCSAYKLVCYFTSWSQYREGVGSFLPDAIQPFLCTHIIYSFANISSDNMLSTWEWNDESNYDKLNKLKTRNTNLKTLLSVGGWKFGEKRFSEIASNTERRTAFVRSVAPFLRSYGFDGLDLAWLYPRLRDKQYFSTLIKELNAEFTKEVQPGREKLLLSAALSAGKVAIDTGYDIAQIAQHLDFINLMTYDFHGVWRQITGHHSPLFQGQKDTRFDRYSNVNYAVQYMIRLGAQASKLLMGIPTFGKSFTLASSENQLGAPISGEGLPGRFTKEAGTLAYYEICDFLKGAEVHRLSNEKVPFATKGNQWVGYEDKESVKNKVGFLKEKKLAGAMVWALDLDDFQGTCQPKEFFPLTNAIKDALA.

The first 29 residues, 1–29, serve as a signal peptide directing secretion; the sequence is MHTSTEARMGMRAALTGFAVLMLLQSCSA. The GH18 domain maps to 30–389; sequence YKLVCYFTSW…LTNAIKDALA (360 aa). Cysteine 34 and cysteine 59 are disulfide-bonded. Asparagine 68 is a glycosylation site (N-linked (GlcNAc...) asparagine). Chitin-binding positions include 79–80, 106–109, tyrosine 150, and 213–216; these read EW, GGWK, and MTYD. Cysteine 309 and cysteine 372 form a disulfide bridge. Positions 333–347 are important for AKT1 activation and IL8 production; it reads QWVGYEDKESVKNKV. A chitin-binding site is contributed by tryptophan 361.

This sequence belongs to the glycosyl hydrolase 18 family. Monomer. Detected in lung in pulmonary macrophages and alveolar type 2 cells and in bronchoalveolar lavage (BAL) fluids. Expressed in mammary tumor cells (at protein level). Expressed in lung. Not detected in non-inflammatory colon.

It localises to the secreted. Its subcellular location is the extracellular space. The protein localises to the cytoplasm. It is found in the endoplasmic reticulum. Carbohydrate-binding lectin with a preference for chitin. Has no chitinase activity. May play a role in tissue remodeling and in the capacity of cells to respond to and cope with changes in their environment. Plays a role in T-helper cell type 2 (Th2) inflammatory response and IL-13-induced inflammation, regulating allergen sensitization, inflammatory cell apoptosis, dendritic cell accumulation and M2 macrophage differentiation. Facilitates invasion of pathogenic enteric bacteria into colonic mucosa and lymphoid organs. Mediates activation of AKT1 signaling pathway and subsequent IL8 production in colonic epithelial cells. Regulates antibacterial responses in lung by contributing to macrophage bacterial killing, controlling bacterial dissemination and augmenting host tolerance. Also regulates hyperoxia-induced injury, inflammation and epithelial apoptosis in lung. This chain is Chitinase-3-like protein 1 (Chi3l1), found in Mus musculus (Mouse).